The sequence spans 95 residues: Large ribosomal subunit protein bL27 (95 aa).

Residues 1–6 (MKLQLF) constitute a propeptide that is removed on maturation. Positions 1-25 (MKLQLFAHKKGVGSSRNGRDSESKR) are disordered.

This sequence belongs to the bacterial ribosomal protein bL27 family. In terms of processing, the N-terminus is cleaved by ribosomal processing cysteine protease Prp.

The chain is Large ribosomal subunit protein bL27 from Thermoanaerobacter pseudethanolicus (strain ATCC 33223 / 39E) (Clostridium thermohydrosulfuricum).